A 786-amino-acid chain; its full sequence is Digalactosyldiacylglycerol synthase 1, chloroplastic (786 aa).

The N-terminal 25 residues, 1 to 25 (MASQRQPPSSSNAFSFLSKGWREVR), are a transit peptide targeting the chloroplast.

The protein belongs to the glycosyltransferase group 1 family. Glycosyltransferase 4 subfamily. As to expression, high expression in nodules infected cells, but low in nodule inner cortex and root central cylinder.

Its subcellular location is the plastid. It localises to the chloroplast outer membrane. The protein localises to the plastid outer membrane. It carries out the reaction a 1,2-diacyl-3-O-(beta-D-galactosyl)-sn-glycerol + UDP-alpha-D-galactose = a 1,2-diacyl-3-O-[alpha-D-galactosyl-(1-&gt;6)-beta-D-galactosyl]-sn-glycerol + UDP + H(+). In terms of biological role, involved in the synthesis of diacylglycerol galactolipids that are specifically found in thylakoid and in nodule peribacteroid membranes. Specific for alpha-glycosidic linkages. The sequence is that of Digalactosyldiacylglycerol synthase 1, chloroplastic from Lotus japonicus (Lotus corniculatus var. japonicus).